Reading from the N-terminus, the 219-residue chain is HTH-type transcriptional regulator LutR (219 aa).

The region spanning 1 to 56 (MIKNGELKPGDKLDSVQALAESFQVSRSAVREALSALKAMGLVEMKQGEGTYLKEF) is the HTH gntR-type domain. A DNA-binding region (H-T-H motif) is located at residues 16–35 (VQALAESFQVSRSAVREALS).

In terms of biological role, negatively regulates the transcription of the lutABC operon, which is required for L-lactate utilization. LutR activity is regulated by lactate, since presence of L-lactate, that probably binds to LutR, leads to derepression of the operon. Also appears to be essential for bacilysin biosynthesis. The chain is HTH-type transcriptional regulator LutR (lutR) from Bacillus subtilis (strain 168).